Here is a 99-residue protein sequence, read N- to C-terminus: Apolipoprotein C-III (99 aa).

An N-terminal signal peptide occupies residues 1–20 (MQPRTLLTVALLALLASARA). At methionine 63 the chain carries Methionine sulfoxide. The segment at 68 to 99 (RFLKGYWSKFTDKFTGFWDSNPEDQPTPAIES) is lipid-binding. An O-linked (GalNAc...) threonine glycan is attached at threonine 94.

Belongs to the apolipoprotein C3 family. In terms of processing, the most abundant glycoforms are characterized by an O-linked disaccharide galactose linked to N-acetylgalactosamine (Gal-GalNAc), further modified with up to 3 sialic acid residues. Less abundant glycoforms are characterized by more complex and fucosylated glycan moieties. O-glycosylated on Thr-94 with a core 1 or possibly core 8 glycan.

Its subcellular location is the secreted. Its function is as follows. Component of triglyceride-rich very low density lipoproteins (VLDL) and high density lipoproteins (HDL) in plasma. Plays a multifaceted role in triglyceride homeostasis. Intracellularly, promotes hepatic very low density lipoprotein 1 (VLDL1) assembly and secretion; extracellularly, attenuates hydrolysis and clearance of triglyceride-rich lipoproteins (TRLs). Impairs the lipolysis of TRLs by inhibiting lipoprotein lipase and the hepatic uptake of TRLs by remnant receptors. Formed of several curved helices connected via semiflexible hinges, so that it can wrap tightly around the curved micelle surface and easily adapt to the different diameters of its natural binding partners. This Mus musculus (Mouse) protein is Apolipoprotein C-III (Apoc3).